We begin with the raw amino-acid sequence, 348 residues long: Phosphate acyltransferase (348 aa).

It belongs to the PlsX family. In terms of assembly, homodimer. Probably interacts with PlsY.

Its subcellular location is the cytoplasm. The catalysed reaction is a fatty acyl-[ACP] + phosphate = an acyl phosphate + holo-[ACP]. It functions in the pathway lipid metabolism; phospholipid metabolism. In terms of biological role, catalyzes the reversible formation of acyl-phosphate (acyl-PO(4)) from acyl-[acyl-carrier-protein] (acyl-ACP). This enzyme utilizes acyl-ACP as fatty acyl donor, but not acyl-CoA. The polypeptide is Phosphate acyltransferase (Rhizobium etli (strain ATCC 51251 / DSM 11541 / JCM 21823 / NBRC 15573 / CFN 42)).